A 318-amino-acid polypeptide reads, in one-letter code: uncharacterized protein (318 aa).

The protein belongs to the NAD(P)-dependent epimerase/dehydratase family.

This is an uncharacterized protein from Staphylococcus haemolyticus (strain JCSC1435).